The following is a 155-amino-acid chain: SsrA-binding protein (155 aa).

Basic and acidic residues predominate over residues 135–147 (TIKRRDQERDIKK). Residues 135 to 155 (TIKRRDQERDIKKQMKHYNAR) are disordered.

Belongs to the SmpB family.

Its subcellular location is the cytoplasm. Functionally, required for rescue of stalled ribosomes mediated by trans-translation. Binds to transfer-messenger RNA (tmRNA), required for stable association of tmRNA with ribosomes. tmRNA and SmpB together mimic tRNA shape, replacing the anticodon stem-loop with SmpB. tmRNA is encoded by the ssrA gene; the 2 termini fold to resemble tRNA(Ala) and it encodes a 'tag peptide', a short internal open reading frame. During trans-translation Ala-aminoacylated tmRNA acts like a tRNA, entering the A-site of stalled ribosomes, displacing the stalled mRNA. The ribosome then switches to translate the ORF on the tmRNA; the nascent peptide is terminated with the 'tag peptide' encoded by the tmRNA and targeted for degradation. The ribosome is freed to recommence translation, which seems to be the essential function of trans-translation. The protein is SsrA-binding protein of Streptococcus pyogenes serotype M12 (strain MGAS2096).